The following is a 154-amino-acid chain: Large ribosomal subunit protein uL13 (154 aa).

Belongs to the universal ribosomal protein uL13 family. Part of the 50S ribosomal subunit.

In terms of biological role, this protein is one of the early assembly proteins of the 50S ribosomal subunit, although it is not seen to bind rRNA by itself. It is important during the early stages of 50S assembly. The chain is Large ribosomal subunit protein uL13 from Rhizobium johnstonii (strain DSM 114642 / LMG 32736 / 3841) (Rhizobium leguminosarum bv. viciae).